The primary structure comprises 166 residues: Bacterial non-heme ferritin (166 aa).

Residues 2–145 form the Ferritin-like diiron domain; the sequence is LSKELLAALN…THIDYLTRIG (144 aa). 5 residues coordinate Fe cation: glutamate 17, glutamate 50, histidine 53, glutamate 94, and glutamine 127.

This sequence belongs to the ferritin family. Prokaryotic subfamily.

The protein localises to the cytoplasm. It catalyses the reaction 4 Fe(2+) + O2 + 6 H2O = 4 iron(III) oxide-hydroxide + 12 H(+). Functionally, iron-storage protein. The sequence is that of Bacterial non-heme ferritin (ftnA) from Staphylococcus epidermidis (strain ATCC 12228 / FDA PCI 1200).